Consider the following 299-residue polypeptide: MSEHTDVLVLGGAGVDTIAYVPELPLPFQDSYVVAAIEPRAGQTGDNVALGLHTLGLRTMHVDVLGDDPEGDLVRAFHTRHGLPFAALPTAAGTKRAVNLVGPDGRRLSLWDGSREAEEDRYPAALIAAHTAHARHVHVCITPPGQHVFGQLNDLPVTVSTDLHNWDGAYEGFEVYAFNADLVFLSATALTDVAATMRRVIDRGRARLVVATDGAHGGSVLVRGETEVRRYAAVAPEAPVVDSNGAGDAFVSGFLFGHLAGEPLETCLRYGAIAGAYACTIPATRAGAIDRAALLRPAA.

It belongs to the carbohydrate kinase PfkB family.

The catalysed reaction is acarbose + ATP = acarbose 7(IV)-phosphate + ADP + H(+). Its function is as follows. Catalyzes the phosphorylation of the alpha-glucosidase inhibitor acarbose. Phosphorylation of acarbose could be a resistance-like self-protection mechanism. This is Acarbose 7(IV)-phosphotransferase from Actinoplanes sp. (strain ATCC 31044 / CBS 674.73 / SE50/110).